The chain runs to 312 residues: 26S proteasome non-ATPase regulatory subunit 14 (312 aa).

Residues 33 to 168 enclose the MPN domain; that stretch reads VYISSLALLK…IDAFRTINPQ (136 aa). Positions 115, 117, and 128 each coordinate Zn(2+). The JAMM motif signature appears at 115 to 128; that stretch reads HSHPGFGCWLSGVD.

The protein belongs to the peptidase M67A family. PSMD14 subfamily. In terms of assembly, component of the 19S regulatory cap of the 26S proteasome.

In terms of biological role, metalloprotease component of the 26S proteasome that specifically cleaves 'Lys-63'-linked polyubiquitin chains. The 26S proteasome is involved in the ATP-dependent degradation of ubiquitinated proteins. The function of the 'Lys-63'-specific deubiquitination of the proteasome is unclear. This chain is 26S proteasome non-ATPase regulatory subunit 14 (rpn-11), found in Caenorhabditis elegans.